The primary structure comprises 1021 residues: Inversin (1021 aa).

ANK repeat units lie at residues 7-36 (QNPS…LRDS), 40-69 (FGRT…GINK), 73-102 (SQRT…DWRL), 106-137 (EEMT…EVDT), 141-170 (NKQT…NIGI), 174-206 (EGKI…TESL), 213-243 (EGRT…SVTA), 247-276 (LFRT…SGMI), 281-310 (QGAT…VRDE), 314-343 (EGRT…DIDI), 349-378 (YGGT…MVDP), 382-411 (MKHT…RVDL), 415-444 (DGHS…SPNL), 448-477 (AGRT…DPNI), 481-510 (EGRT…FPNH), and 516-546 (ERYT…SIAA). The short motif at 483–491 (RTALHWSCN) is the D-box 1 element. The 30-residue stretch at 548 to 577 (QDIAASSIQALYKGYKVRRAFRERKKLLMR) folds into the IQ 1 domain. Basic and acidic residues-rich tracts occupy residues 579–598 (EQLR…REAE) and 653–669 (SRRE…REPE). 3 disordered regions span residues 579–602 (EQLR…QQLS), 632–691 (KDSV…KKCP), and 704–868 (GPDT…GTCS). Residues 722 to 731 (PAGSSRPGSA) are compositionally biased toward low complexity. Polar residues-rich tracts occupy residues 759–781 (GAHS…TSKG) and 791–802 (TGSQPSNNTSVT). A compositionally biased stretch (basic and acidic residues) spans 803–866 (RQKEKRQEKE…KEKEKKKDGT (64 aa)). The short motif at 862-870 (KKDGTCSKN) is the D-box 2 element. Positions 869-898 (KNQAAVVIQRAWRRSCVRGRIRKVLCRSLK) constitute an IQ 2 domain.

As to quaternary structure, binds calmodulin via its IQ domains.

The protein resides in the cytoplasm. It localises to the cytoskeleton. Required for normal renal development and establishment of left-right axis. Probably acts as a molecular switch between different Wnt signaling pathways. Inhibits the canonical Wnt pathway by targeting cytoplasmic disheveled for degradation by the ubiquitin-proteasome. This suggests that it is required in renal development to oppose the repression of terminal differentiation of tubular epithelial cells by Wnt signaling. The protein is Inversin (invs) of Danio rerio (Zebrafish).